A 149-amino-acid polypeptide reads, in one-letter code: 3-hydroxyacyl-[acyl-carrier-protein] dehydratase FabZ (149 aa).

H53 is a catalytic residue.

It belongs to the thioester dehydratase family. FabZ subfamily.

Its subcellular location is the cytoplasm. It carries out the reaction a (3R)-hydroxyacyl-[ACP] = a (2E)-enoyl-[ACP] + H2O. In terms of biological role, involved in unsaturated fatty acids biosynthesis. Catalyzes the dehydration of short chain beta-hydroxyacyl-ACPs and long chain saturated and unsaturated beta-hydroxyacyl-ACPs. The polypeptide is 3-hydroxyacyl-[acyl-carrier-protein] dehydratase FabZ (Polynucleobacter asymbioticus (strain DSM 18221 / CIP 109841 / QLW-P1DMWA-1) (Polynucleobacter necessarius subsp. asymbioticus)).